A 75-amino-acid polypeptide reads, in one-letter code: Tautomerase PptA (75 aa).

The active-site Proton acceptor; via imino nitrogen is P2.

This sequence belongs to the 4-oxalocrotonate tautomerase family. PptA subfamily. Homodimer.

It localises to the cytoplasm. The protein is Tautomerase PptA of Klebsiella pneumoniae (strain 342).